A 548-amino-acid polypeptide reads, in one-letter code: Membrane protein insertase YidC (548 aa).

Residues 6–26 (NLLVIALLFVSFMIWQAWEQD) traverse the membrane as a helical segment. The interval 28-55 (NPQPQAQQTTQTTTTAAGSAADQGVPAS) is disordered. Residues 30–50 (QPQAQQTTQTTTTAAGSAADQ) are compositionally biased toward low complexity. Helical transmembrane passes span 350 to 370 (FVGN…GIMY), 420 to 440 (LGGC…YYML), 458 to 478 (LSAQ…MFFI), and 499 to 519 (PVIF…YYIV).

Belongs to the OXA1/ALB3/YidC family. Type 1 subfamily. In terms of assembly, interacts with the Sec translocase complex via SecD. Specifically interacts with transmembrane segments of nascent integral membrane proteins during membrane integration.

Its subcellular location is the cell inner membrane. Required for the insertion and/or proper folding and/or complex formation of integral membrane proteins into the membrane. Involved in integration of membrane proteins that insert both dependently and independently of the Sec translocase complex, as well as at least some lipoproteins. Aids folding of multispanning membrane proteins. This Escherichia coli O127:H6 (strain E2348/69 / EPEC) protein is Membrane protein insertase YidC.